Here is a 629-residue protein sequence, read N- to C-terminus: Protein SPT2 homolog (629 aa).

Residues 1–522 (MDFDSVLSIA…SGHRILVKPS (522 aa)) form an important for interaction with DNA region. A coiled-coil region spans residues 45–72 (QAFLKKKAVEQKNKEQQDKKAKEDLLAK). Residues 53-93 (VEQKNKEQQDKKAKEDLLAKRVELKSDRKARAMASRTKDNF) are compositionally biased toward basic and acidic residues. Disordered regions lie at residues 53–181 (VEQK…ASSS), 206–533 (KTEE…TSSY), and 608–629 (EDEE…KKRK). Polar residues predominate over residues 111–123 (KGSSTEEQQSSTK). Over residues 127 to 144 (GDYDDEDNFDYEGTDSES) the composition is skewed to acidic residues. A coiled-coil region spans residues 203–228 (VVKKTEERLRTAEEIRELEMERRVKK). Composition is skewed to basic and acidic residues over residues 206-247 (KTEE…KDSR) and 257-277 (KHVD…EKHQ). Composition is skewed to polar residues over residues 278–297 (SSST…TPTS), 305–327 (SNSG…SFQA), 335–345 (SQGQRPATPSD), 353–364 (VSLTQAKSSISG), 387–398 (SNFSTSGPSQKP), 437–450 (NLQS…SRAS), and 462–490 (SGSQ…TKNI). Positions 523–629 (GPALPPITSS…MQRKNAKKRK (107 aa)) are important for interaction with histones. The stretch at 591–629 (WKEQQKEEARSLRMAVLEDEEEERRELEEMQRKNAKKRK) forms a coiled coil.

Belongs to the SPT2 family. Interacts with histones. Interacts with a heterotetrameric complex formed by histone H3 and H4, especially when the histone tetramer is not bound to DNA.

The protein localises to the nucleus. It is found in the nucleolus. Its function is as follows. Histone chaperone that stabilizes pre-existing histone tetramers and regulates replication-independent histone exchange on chromatin. Required for normal chromatin refolding in the coding region of transcribed genes, and for the suppression of spurious transcription. Binds DNA and histones and promotes nucleosome assembly (in vitro). Facilitates formation of tetrameric histone complexes containing histone H3 and H4. Modulates RNA polymerase 1-mediated transcription. Binds DNA, with a preference for branched DNA species, such as Y-form DNA and Holliday junction DNA. This chain is Protein SPT2 homolog (spty2d1), found in Danio rerio (Zebrafish).